An 863-amino-acid polypeptide reads, in one-letter code: Paramyosin (863 aa).

The nonhelical region stretch occupies residues 1–18; that stretch reads MSESHVKISRTIIRGTSP. Positions 19 to 836 form a coiled coil; that stretch reads STVRLESRVR…ERTITIKRTI (818 aa). Residues 837 to 863 form a nonhelical region region; it reads GGPGSRAVSVVREINSVSRGNRATSIM.

The protein belongs to the paramyosin family. In terms of assembly, homodimer.

The protein resides in the cytoplasm. The protein localises to the myofibril. Paramyosin is a major structural component of many thick filaments isolated from invertebrate muscles. The sequence is that of Paramyosin (PMY) from Taenia saginata (Beef tapeworm).